The sequence spans 644 residues: Phosphomethylpyrimidine synthase (644 aa).

Residues Asn-236, Met-265, Tyr-294, His-330, Ser-350–Gly-352, Asp-391–Arg-394, and Glu-430 contribute to the substrate site. Residue His-434 participates in Zn(2+) binding. Tyr-457 contributes to the substrate binding site. His-498 contributes to the Zn(2+) binding site. Cys-578, Cys-581, and Cys-586 together coordinate [4Fe-4S] cluster.

This sequence belongs to the ThiC family. As to quaternary structure, homodimer. Requires [4Fe-4S] cluster as cofactor.

It catalyses the reaction 5-amino-1-(5-phospho-beta-D-ribosyl)imidazole + S-adenosyl-L-methionine = 4-amino-2-methyl-5-(phosphooxymethyl)pyrimidine + CO + 5'-deoxyadenosine + formate + L-methionine + 3 H(+). The protein operates within cofactor biosynthesis; thiamine diphosphate biosynthesis. In terms of biological role, catalyzes the synthesis of the hydroxymethylpyrimidine phosphate (HMP-P) moiety of thiamine from aminoimidazole ribotide (AIR) in a radical S-adenosyl-L-methionine (SAM)-dependent reaction. The protein is Phosphomethylpyrimidine synthase of Aliivibrio fischeri (strain ATCC 700601 / ES114) (Vibrio fischeri).